Consider the following 240-residue polypeptide: 1-(5-phosphoribosyl)-5-[(5-phosphoribosylamino)methylideneamino] imidazole-4-carboxamide isomerase (240 aa).

The Proton acceptor role is filled by D9. D131 functions as the Proton donor in the catalytic mechanism.

Belongs to the HisA/HisF family.

It localises to the cytoplasm. The catalysed reaction is 1-(5-phospho-beta-D-ribosyl)-5-[(5-phospho-beta-D-ribosylamino)methylideneamino]imidazole-4-carboxamide = 5-[(5-phospho-1-deoxy-D-ribulos-1-ylimino)methylamino]-1-(5-phospho-beta-D-ribosyl)imidazole-4-carboxamide. Its pathway is amino-acid biosynthesis; L-histidine biosynthesis; L-histidine from 5-phospho-alpha-D-ribose 1-diphosphate: step 4/9. The protein is 1-(5-phosphoribosyl)-5-[(5-phosphoribosylamino)methylideneamino] imidazole-4-carboxamide isomerase of Azobacteroides pseudotrichonymphae genomovar. CFP2.